The following is a 410-amino-acid chain: Acetate kinase (410 aa).

Asparagine 7 is a Mg(2+) binding site. Residue lysine 14 participates in ATP binding. Position 88 (arginine 88) interacts with substrate. Catalysis depends on aspartate 145, which acts as the Proton donor/acceptor. ATP is bound by residues 203–207, 278–280, and 326–330; these read HAGNG, DTR, and GIGEN. Mg(2+) is bound at residue glutamate 379.

This sequence belongs to the acetokinase family. In terms of assembly, homodimer. Mg(2+) is required as a cofactor. The cofactor is Mn(2+).

The protein localises to the cytoplasm. It catalyses the reaction acetate + ATP = acetyl phosphate + ADP. It functions in the pathway metabolic intermediate biosynthesis; acetyl-CoA biosynthesis; acetyl-CoA from acetate: step 1/2. Functionally, catalyzes the formation of acetyl phosphate from acetate and ATP. Can also catalyze the reverse reaction. This Onion yellows phytoplasma (strain OY-M) protein is Acetate kinase.